Reading from the N-terminus, the 232-residue chain is Glutathione S-transferase E14 (232 aa).

The GST N-terminal domain occupies 4–85; that stretch reads PKPILYYDER…HLAEKFDEGG (82 aa). One can recognise a GST C-terminal domain in the interval 91-218; sequence EHAERMKVLN…RQTMESVGSF (128 aa).

This sequence belongs to the GST superfamily. Epsilon family. As to expression, expressed in the adult ovary (at protein level).

It carries out the reaction RX + glutathione = an S-substituted glutathione + a halide anion + H(+). Functionally, conjugation of reduced glutathione to a wide number of exogenous and endogenous hydrophobic electrophiles. Essential for ecdysteroid biosynthesis. May be involved in detoxification. The protein is Glutathione S-transferase E14 of Drosophila melanogaster (Fruit fly).